The chain runs to 139 residues: Ribulose bisphosphate carboxylase small subunit (139 aa).

This sequence belongs to the RuBisCO small chain family. Heterohexadecamer of 8 large and 8 small subunits.

It localises to the plastid. Its subcellular location is the chloroplast. Its function is as follows. RuBisCO catalyzes two reactions: the carboxylation of D-ribulose 1,5-bisphosphate, the primary event in carbon dioxide fixation, as well as the oxidative fragmentation of the pentose substrate in the photorespiration process. Both reactions occur simultaneously and in competition at the same active site. Although the small subunit is not catalytic it is essential for maximal activity. This is Ribulose bisphosphate carboxylase small subunit from Thalassiosira nordenskioeldii (Marine diatom).